The sequence spans 365 residues: Alanine racemase (365 aa).

Lys32 (proton acceptor; specific for D-alanine) is an active-site residue. Lys32 carries the N6-(pyridoxal phosphate)lysine modification. Arg128 is a binding site for substrate. Tyr257 (proton acceptor; specific for L-alanine) is an active-site residue. Met305 is a substrate binding site.

The protein belongs to the alanine racemase family. Pyridoxal 5'-phosphate is required as a cofactor.

It carries out the reaction L-alanine = D-alanine. The protein operates within amino-acid biosynthesis; D-alanine biosynthesis; D-alanine from L-alanine: step 1/1. Functionally, catalyzes the interconversion of L-alanine and D-alanine. May also act on other amino acids. In Francisella tularensis subsp. holarctica (strain FTNF002-00 / FTA), this protein is Alanine racemase (alr).